The sequence spans 381 residues: Alkanesulfonate monooxygenase (381 aa).

This sequence belongs to the SsuD family. Homotetramer.

The catalysed reaction is an alkanesulfonate + FMNH2 + O2 = an aldehyde + FMN + sulfite + H2O + 2 H(+). Its function is as follows. Catalyzes the desulfonation of aliphatic sulfonates. This Escherichia coli O1:K1 / APEC protein is Alkanesulfonate monooxygenase.